Reading from the N-terminus, the 381-residue chain is Glycerate 2-kinase (381 aa).

The protein belongs to the glycerate kinase type-1 family.

It carries out the reaction (R)-glycerate + ATP = (2R)-2-phosphoglycerate + ADP + H(+). Functionally, catalyzes the transfer of the phosphate group from adenosine triphosphate (ATP) to (R)-glycerate to form (2R)-2-phosphoglycerate, an enzymatic step in (L)-glucarate/galactarate catabolic pathway. The chain is Glycerate 2-kinase (garK) from Escherichia coli (strain K12).